The chain runs to 757 residues: Protein ALTERED SEED GERMINATION 2 (757 aa).

6 WD repeats span residues 6–43, 48–87, 91–132, 145–185, 213–253, and 277–316; these read FHDGNIFNLLHTRSQDPSHEVDQRMQFHSSLVRRLSQE, GHQGCVNALAWNSNGSLLISGSDDLRINIWNYSSRKLLHS, GHTA…GRAE, CHTR…SCPP, KQTL…PLAS, and RTNLHLTHVTFSPNGEEVLLSYSGEHVYLMNVNNGICSTG. Residues 245 to 257 carry the Nuclear localization signal motif; sequence RRMLPPLASSRKR. The TPR repeat unit spans residues 442-475; it reads FKAHYYMSEALQQLGKCKEALDFATAAQHMNPSD. The interval 519 to 601 is disordered; it reads ANSDSSHDMS…SSSQNDRTSY (83 aa). A compositionally biased stretch (basic and acidic residues) spans 523 to 532; the sequence is SSHDMSRSER. The span at 533–543 shows a compositional bias: acidic residues; sequence EDSDYDEELEL. Positions 582 to 601 are enriched in polar residues; it reads TVDNASSGTASSSQNDRTSY. WD repeat units follow at residues 618–658 and 661–700; these read NVGT…LMKV and GDESVLNCIQCHPFDSVVATSGIDNTIKIWSPTASVPSIV. The S-12-hydroxyfarnesyl cysteine; by FTB/ERA1 moiety is linked to residue Cys754.

As to quaternary structure, interacts with DDB1; the subcellular localization of this complex depends on farnesylation status. Binds to HDA9 in the cytosol when farnesylated. Farnesylated at Cys-754 by FTB/ERA1; this modification triggers an exclusion from the nucleus.

It localises to the nucleus. The protein resides in the cytoplasm. Its subcellular location is the cytosol. It functions in the pathway protein modification; protein ubiquitination. May function as a substrate adapter for CUL4-DDB1 E3 ubiquitin-protein ligase complex. Negative regulator of fatty acid biosynthetic process and accumulation. Acts as an abscisic acid (ABA) negative regulator. Involved in responses to salt (NaCl) and osmotic (e.g. in response to mannitol and PEG) stresses. In Arabidopsis thaliana (Mouse-ear cress), this protein is Protein ALTERED SEED GERMINATION 2.